Consider the following 136-residue polypeptide: Histone H3.2 (136 aa).

Residues 1–20 form a disordered region; the sequence is MARTKQTARKSTGGKAPRKQ. Lysine 5 carries the post-translational modification N6-methylated lysine. Lysine 10 is modified (N6-acetyllysine; alternate). Lysine 10 is subject to N6-methylated lysine; alternate. Position 11 is a phosphoserine (serine 11). The residue at position 12 (threonine 12) is a Phosphothreonine. An N6-acetyllysine modification is found at lysine 15. N6-acetyllysine; alternate occurs at positions 19 and 24. An N6-methylated lysine; alternate mark is found at lysine 19 and lysine 24. Residue lysine 37 is modified to N6-methylated lysine.

This sequence belongs to the histone H3 family. The nucleosome is a histone octamer containing two molecules each of H2A, H2B, H3 and H4 assembled in one H3-H4 heterotetramer and two H2A-H2B heterodimers. The octamer wraps approximately 147 bp of DNA. In terms of processing, acetylation is generally linked to gene activation. Can be acetylated to form H3K9ac, H3K14ac, H3K18ac and H3K23ac. H3K9ac could compete with H3K9me and prevent gene silencing. H3K9ac is restricted to euchromatin. Post-translationally, methylated to form mainly H3K4me, H3K9me, H3K18me, H3K23me and H3K36me. H3K4me1/2/3, H3K9me3 and H3K36me1/2/3 are typical marks for euchromatin, whereas heterochromatic chromocenters are enriched in H3K9me1/2. H2BK143ub1 is probably prerequisite for H3K4me. Can be phosphorylated to form H3S10ph and H3T11ph.

It localises to the nucleus. The protein localises to the chromosome. In terms of biological role, core component of nucleosome. Nucleosomes wrap and compact DNA into chromatin, limiting DNA accessibility to the cellular machineries which require DNA as a template. Histones thereby play a central role in transcription regulation, DNA repair, DNA replication and chromosomal stability. DNA accessibility is regulated via a complex set of post-translational modifications of histones, also called histone code, and nucleosome remodeling. This chain is Histone H3.2, found in Cichorium intybus (Chicory).